The primary structure comprises 233 residues: Triosephosphate isomerase (233 aa).

Position 8-10 (8-10 (NWK)) interacts with substrate. Histidine 91 functions as the Electrophile in the catalytic mechanism. Glutamate 155 serves as the catalytic Proton acceptor. Substrate-binding residues include glycine 161 and serine 192.

The protein belongs to the triosephosphate isomerase family. As to quaternary structure, homodimer.

Its subcellular location is the cytoplasm. It catalyses the reaction D-glyceraldehyde 3-phosphate = dihydroxyacetone phosphate. It functions in the pathway carbohydrate biosynthesis; gluconeogenesis. It participates in carbohydrate degradation; glycolysis; D-glyceraldehyde 3-phosphate from glycerone phosphate: step 1/1. Its function is as follows. Involved in the gluconeogenesis. Catalyzes stereospecifically the conversion of dihydroxyacetone phosphate (DHAP) to D-glyceraldehyde-3-phosphate (G3P). This is Triosephosphate isomerase from Wolbachia sp. subsp. Brugia malayi (strain TRS).